The sequence spans 235 residues: Probable ribonuclease P protein subunit 3 (235 aa).

It belongs to the eukaryotic/archaeal RNase P protein component 3 family.

It is found in the nucleus. The enzyme catalyses Endonucleolytic cleavage of RNA, removing 5'-extranucleotides from tRNA precursor.. Its function is as follows. Part of ribonuclease P, a protein complex that generates mature tRNA molecules by cleaving their 5'-ends. The chain is Probable ribonuclease P protein subunit 3 from Schizosaccharomyces pombe (strain 972 / ATCC 24843) (Fission yeast).